The chain runs to 238 residues: Ribonuclease PH (238 aa).

Residues Arg86 and 124 to 126 contribute to the phosphate site; that span reads GTR.

It belongs to the RNase PH family. In terms of assembly, homohexameric ring arranged as a trimer of dimers.

It carries out the reaction tRNA(n+1) + phosphate = tRNA(n) + a ribonucleoside 5'-diphosphate. Its function is as follows. Phosphorolytic 3'-5' exoribonuclease that plays an important role in tRNA 3'-end maturation. Removes nucleotide residues following the 3'-CCA terminus of tRNAs; can also add nucleotides to the ends of RNA molecules by using nucleoside diphosphates as substrates, but this may not be physiologically important. Probably plays a role in initiation of 16S rRNA degradation (leading to ribosome degradation) during starvation. The sequence is that of Ribonuclease PH from Photobacterium profundum (strain SS9).